The primary structure comprises 91 residues: Small ribosomal subunit protein uS19 (91 aa).

Residues 72–91 (GEFSPTRKFGGHGDDKKKKK) form a disordered region. Residues 82–91 (GHGDDKKKKK) show a composition bias toward basic and acidic residues.

It belongs to the universal ribosomal protein uS19 family.

In terms of biological role, protein S19 forms a complex with S13 that binds strongly to the 16S ribosomal RNA. This chain is Small ribosomal subunit protein uS19, found in Spiroplasma kunkelii.